The sequence spans 346 residues: NADH-ubiquinone oxidoreductase chain 2 (346 aa).

Helical transmembrane passes span M1–I21, H25–S45, F60–A80, M96–P116, L124–M144, L149–G169, I178–P198, L200–N220, A242–P262, E274–L294, and I325–A345.

The protein belongs to the complex I subunit 2 family.

The protein resides in the mitochondrion inner membrane. The enzyme catalyses a ubiquinone + NADH + 5 H(+)(in) = a ubiquinol + NAD(+) + 4 H(+)(out). Functionally, core subunit of the mitochondrial membrane respiratory chain NADH dehydrogenase (Complex I) that is believed to belong to the minimal assembly required for catalysis. Complex I functions in the transfer of electrons from NADH to the respiratory chain. The immediate electron acceptor for the enzyme is believed to be ubiquinone. The polypeptide is NADH-ubiquinone oxidoreductase chain 2 (MT-ND2) (Struthio camelus (Common ostrich)).